The following is a 216-amino-acid chain: Small ribosomal subunit protein uS3c (216 aa).

The 76-residue stretch at 43–118 folds into the KH type-2 domain; sequence IKNYLQKNMR…KLNIAITRIT (76 aa).

Belongs to the universal ribosomal protein uS3 family. In terms of assembly, part of the 30S ribosomal subunit.

The protein localises to the plastid. It is found in the chloroplast. The protein is Small ribosomal subunit protein uS3c (rps3) of Eucalyptus globulus subsp. globulus (Tasmanian blue gum).